Consider the following 428-residue polypeptide: Adenylosuccinate synthetase (428 aa).

GTP contacts are provided by residues 12 to 18 (GDEGKGK) and 40 to 42 (GHS). D13 functions as the Proton acceptor in the catalytic mechanism. Residues D13 and G40 each coordinate Mg(2+). IMP-binding positions include 13–16 (DEGK), 38–41 (NAGH), T128, R142, Q223, T238, and R302. H41 functions as the Proton donor in the catalytic mechanism. Position 298–304 (298–304 (VTTGRPR)) interacts with substrate. GTP is bound by residues R304, 330–332 (KLD), and 412–414 (GTG).

This sequence belongs to the adenylosuccinate synthetase family. In terms of assembly, homodimer. The cofactor is Mg(2+).

It localises to the cytoplasm. The enzyme catalyses IMP + L-aspartate + GTP = N(6)-(1,2-dicarboxyethyl)-AMP + GDP + phosphate + 2 H(+). It functions in the pathway purine metabolism; AMP biosynthesis via de novo pathway; AMP from IMP: step 1/2. Its function is as follows. Plays an important role in the de novo pathway of purine nucleotide biosynthesis. Catalyzes the first committed step in the biosynthesis of AMP from IMP. The sequence is that of Adenylosuccinate synthetase from Bifidobacterium longum (strain NCC 2705).